A 104-amino-acid polypeptide reads, in one-letter code: Large ribosomal subunit protein uL24 (104 aa).

This sequence belongs to the universal ribosomal protein uL24 family. As to quaternary structure, part of the 50S ribosomal subunit.

One of two assembly initiator proteins, it binds directly to the 5'-end of the 23S rRNA, where it nucleates assembly of the 50S subunit. Its function is as follows. One of the proteins that surrounds the polypeptide exit tunnel on the outside of the subunit. The polypeptide is Large ribosomal subunit protein uL24 (Shigella flexneri).